We begin with the raw amino-acid sequence, 194 residues long: Probable GTP-binding protein EngB (194 aa).

The EngB-type G domain maps to 22–194; it reads DLPEYALAGR…AWQFIKEGME (173 aa). GTP-binding positions include 30 to 37, 57 to 61, 75 to 78, 142 to 145, and 174 to 176; these read GRSNVGKS, GKTQT, DVPG, TKAD, and FSS. Residues Ser37 and Thr59 each contribute to the Mg(2+) site.

The protein belongs to the TRAFAC class TrmE-Era-EngA-EngB-Septin-like GTPase superfamily. EngB GTPase family. Mg(2+) is required as a cofactor.

Its function is as follows. Necessary for normal cell division and for the maintenance of normal septation. The protein is Probable GTP-binding protein EngB of Listeria innocua serovar 6a (strain ATCC BAA-680 / CLIP 11262).